Consider the following 923-residue polypeptide: Calmodulin-binding transcription activator 5 (923 aa).

The segment at residues 25–151 is a DNA-binding region (CG-1); the sequence is IQTMLDEAYS…YRETHEVHAA (127 aa). The segment at 272–372 is transcription activation; it reads VYQNNNSCGA…HSHSDIPEQV (101 aa). The stretch at 611–640 is one ANK repeat; that stretch reads QGWTALHWAAYYGREKMVAALLSAGARPNL. 3 consecutive IQ domains span residues 757–786, 799–828, and 875–904; these read NIIA…IQYR, MRKK…SVGV, and LERS…AHEE. The calmodulin-binding stretch occupies residues 824–846; it reads WSVGVLEKAILRWRLKRKGFRGL. Positions 887 to 914 form a coiled coil; the sequence is RSKKAQQDYRRMKLAHEEAQLEYDGMQE.

It belongs to the CAMTA family. Expressed in roots, stems, leaves, pollen, top of sepals and siliques.

The protein localises to the nucleus. In terms of biological role, transcription activator. Binds to the DNA consensus sequence 5'-[ACG]CGCG[GTC]-3'. Regulates transcriptional activity in response to calcium signals. Binds calmodulin in a calcium-dependent manner. Involved in response to cold. Contributes together with CAMTA3 to the positive regulation of the cold-induced expression of DREB1A/CBF3, DREB1B/CBF1 and DREB1C/CBF2. The polypeptide is Calmodulin-binding transcription activator 5 (Arabidopsis thaliana (Mouse-ear cress)).